A 397-amino-acid polypeptide reads, in one-letter code: uncharacterized protein (397 aa).

4 helical membrane passes run 142 to 162 (WETI…VGIA), 191 to 211 (SQLL…SVVL), 242 to 258 (ALTG…TYFL), and 260 to 280 (APWL…SAGF).

Belongs to the cation diffusion facilitator (CDF) transporter (TC 2.A.4) family. SLC30A subfamily.

It is found in the membrane. This is an uncharacterized protein from Schizosaccharomyces pombe (strain 972 / ATCC 24843) (Fission yeast).